Reading from the N-terminus, the 198-residue chain is Angiopoietin-like protein 8 (198 aa).

The signal sequence occupies residues 1 to 15; the sequence is MAVLALCLLWTLASA.

The protein belongs to the ANGPTL8 family. In terms of assembly, interacts with ANGPTL3. In terms of processing, proteolytically cleaved at the N-terminus. In terms of tissue distribution, expressed in liver and fat. Enriched in white and brown adipose tissues.

The protein localises to the secreted. Functionally, hormone that acts as a blood lipid regulator by regulating serum triglyceride levels. May be involved in the metabolic transition between fasting and refeeding: required to direct fatty acids to adipose tissue for storage in the fed state. According to a report, may act by promoting ANGPTL3 cleavage. According to another study, not required for cleavage of ANGPTL3. The protein is Angiopoietin-like protein 8 of Mus musculus (Mouse).